The sequence spans 693 residues: Cyclin-dependent kinase G-1 (693 aa).

A compositionally biased stretch (gly residues) spans 1-10 (MAAGSHGGYR). Disordered regions lie at residues 1 to 148 (MAAG…ARDP) and 236 to 308 (KKKK…DDYP). The segment covering 13 to 24 (EVAREREHDVGV) has biased composition (basic and acidic residues). The span at 26–39 (RRSKEHYHHRHPSR) shows a compositional bias: basic residues. Composition is skewed to basic and acidic residues over residues 40 to 54 (HRDSERRRDGGRSGG), 75 to 87 (RPSEGRTEDREPG), and 97 to 122 (RSGERPMKTREPRENGVTRVSKEEAK). Positions 268–284 (SVRSSSRSSDSGVLQGS) are enriched in low complexity. Positions 287 to 304 (RDLEVEKGDNIDVEKAAD) are enriched in basic and acidic residues. In terms of domain architecture, Protein kinase spans 349 to 640 (FERLNTINEG…AEDALNHEWF (292 aa)). ATP is bound by residues 355-363 (INEGTYGVV) and lysine 378. The residue at position 359 (threonine 359) is a Phosphothreonine. Tyrosine 360 is modified (phosphotyrosine). Aspartate 473 serves as the catalytic Proton acceptor. Serine 500 carries the post-translational modification Phosphoserine. A Phosphothreonine modification is found at threonine 506. A disordered region spans residues 664 to 693 (RFKKHMKSPDPLEEQWMKEQGNNGDRGLFG).

It belongs to the protein kinase superfamily. CMGC Ser/Thr protein kinase family. CDC2/CDKX subfamily.

The enzyme catalyses L-seryl-[protein] + ATP = O-phospho-L-seryl-[protein] + ADP + H(+). The catalysed reaction is L-threonyl-[protein] + ATP = O-phospho-L-threonyl-[protein] + ADP + H(+). It carries out the reaction [DNA-directed RNA polymerase] + ATP = phospho-[DNA-directed RNA polymerase] + ADP + H(+). The sequence is that of Cyclin-dependent kinase G-1 (CDKG-1) from Oryza sativa subsp. indica (Rice).